We begin with the raw amino-acid sequence, 400 residues long: Formate-dependent phosphoribosylglycinamide formyltransferase (400 aa).

N(1)-(5-phospho-beta-D-ribosyl)glycinamide is bound by residues 21–22 (EL) and Glu81. Residues Arg114, Lys155, 160–165 (SSGKGQ), 195–198 (EGRI), and Glu203 each bind ATP. Residues 119–313 (RLAAEKLGLP…EFELHVRAIL (195 aa)) enclose the ATP-grasp domain. Glu272 and Glu284 together coordinate Mg(2+). N(1)-(5-phospho-beta-D-ribosyl)glycinamide is bound by residues Asp291, Lys360, and 367-368 (RR).

It belongs to the PurK/PurT family. As to quaternary structure, homodimer.

The enzyme catalyses N(1)-(5-phospho-beta-D-ribosyl)glycinamide + formate + ATP = N(2)-formyl-N(1)-(5-phospho-beta-D-ribosyl)glycinamide + ADP + phosphate + H(+). It functions in the pathway purine metabolism; IMP biosynthesis via de novo pathway; N(2)-formyl-N(1)-(5-phospho-D-ribosyl)glycinamide from N(1)-(5-phospho-D-ribosyl)glycinamide (formate route): step 1/1. Its function is as follows. Involved in the de novo purine biosynthesis. Catalyzes the transfer of formate to 5-phospho-ribosyl-glycinamide (GAR), producing 5-phospho-ribosyl-N-formylglycinamide (FGAR). Formate is provided by PurU via hydrolysis of 10-formyl-tetrahydrofolate. The sequence is that of Formate-dependent phosphoribosylglycinamide formyltransferase from Methylococcus capsulatus (strain ATCC 33009 / NCIMB 11132 / Bath).